A 174-amino-acid polypeptide reads, in one-letter code: MDRAQKREFVDQLAAVFAETSMVVVSRNDGLTVADVTALRVKMREAGAQYKVAKNRLAHLALEGTRFDGLKPMLKGPTALAWSQDPVAVAKVAVEFAKTNEKFVLVGGALGTQMLDASGVKALAELPSLDQLRAKLLGLIQAPATKVAGVLQAPAGQLARVFAAYARADEADAA.

This sequence belongs to the universal ribosomal protein uL10 family. In terms of assembly, part of the ribosomal stalk of the 50S ribosomal subunit. The N-terminus interacts with L11 and the large rRNA to form the base of the stalk. The C-terminus forms an elongated spine to which L12 dimers bind in a sequential fashion forming a multimeric L10(L12)X complex.

Its function is as follows. Forms part of the ribosomal stalk, playing a central role in the interaction of the ribosome with GTP-bound translation factors. The sequence is that of Large ribosomal subunit protein uL10 from Acidiphilium cryptum (strain JF-5).